The primary structure comprises 213 residues: Anti-sigma-E factor ChrR (213 aa).

Positions 2 to 85 (TIRHHVSDAL…QIQRPAPARR (84 aa)) are sufficient to bind sigma factor and inhibit its activity. Zn(2+)-binding residues include His6, His31, Cys35, Cys38, His141, His143, Glu147, and His177. The segment at 86 to 194 (ADPRAPAPLA…LDCICLAATD (109 aa)) is required for response to singlet oxygen.

The protein belongs to the zinc-associated anti-sigma factor (ZAS) superfamily. As to quaternary structure, forms a 1:1 complex with cognate ECF RNA polymerase sigma factor RpoE; this inhibits the interaction of RpoE with the RNA polymerase catalytic core. The cofactor is Zn(2+).

Functionally, anti-sigma factor that inhibits the activity of the extracytoplasmic function (ECF) sigma-E factor (RpoE), thereby indirectly regulating the transcription of the cycA and rpoE genes. ECF sigma factors are held in an inactive form by a cognate anti-sigma factor. The sequence is that of Anti-sigma-E factor ChrR (chrR) from Cereibacter sphaeroides (strain ATCC 17023 / DSM 158 / JCM 6121 / CCUG 31486 / LMG 2827 / NBRC 12203 / NCIMB 8253 / ATH 2.4.1.) (Rhodobacter sphaeroides).